A 704-amino-acid chain; its full sequence is MARTTPIARYRNIGISAHIDAGKTTTTERILFYTGVNHKIGEVHDGAATMDWMEQEQERGITITSAATTAFWSGMAKQYEPHRINIIDTPGHVDFTIEVERSMRVLDGAVMVYCAVGGVQPQSETVWRQANKYKVPRIAFVNKMDRVGANFLKVVNQIKTRLGANPVPLQLAIGAEEHFTGVVDLVKMKAINWNDADQGVTFEYEDIPADMVELANEWHQNLIESAAEASEELMEKYLGGEELTEAEIKGALRQRVLNNEIILVTCGSAFKNKGVQAMLDAVIDYLPSPVDVPAINGILDDGKDTPAERHASDDEPFSALAFKIATDPFVGNLTFFRVYSGVVNSGDTVLNSVKAARERFGRIVQMHANKREEIKEVRAGDIAAAIGLKDVTTGDTLCDPDAPIILERMEFPEPVISIAVEPKTKADQEKMGLALGRLAKEDPSFRVWTDEESNQTIIAGMGELHLDIIVDRMKREFNVEANVGKPQVAYRETIRQKVTDVEGKHAKQSGGRGQYGHVVIDMYPLEPGSNPKGYEFINDIKGGVIPGEYIPAVDKGIQEQLKAGPLAGYPVVDMGIRLHFGSYHDVDSSELAFKLAASIAFKEGFKKAKPVLLEPIMKVEVETPEENTGDVIGDLSRRRGMLKGQESEVTGVKIHAEVPLSEMFGYATQLRSLTKGRASYTMEFLKYDEAPSNVAQAVIEARGK.

The tr-type G domain occupies A8–V290. Residues A17–T24, D88–H92, and N142–D145 contribute to the GTP site. N6-acetyllysine occurs at positions 504 and 643.

This sequence belongs to the TRAFAC class translation factor GTPase superfamily. Classic translation factor GTPase family. EF-G/EF-2 subfamily.

It is found in the cytoplasm. Its function is as follows. Catalyzes the GTP-dependent ribosomal translocation step during translation elongation. During this step, the ribosome changes from the pre-translocational (PRE) to the post-translocational (POST) state as the newly formed A-site-bound peptidyl-tRNA and P-site-bound deacylated tRNA move to the P and E sites, respectively. Catalyzes the coordinated movement of the two tRNA molecules, the mRNA and conformational changes in the ribosome. The polypeptide is Elongation factor G (Shigella flexneri).